The sequence spans 209 residues: Small ribosomal subunit protein uS4 (209 aa).

Residues 23-46 are disordered; that stretch reads SRNPLLKKPHPPGQHGMQRKKKSD. Residues 93-156 enclose the S4 RNA-binding domain; the sequence is CRLDNMVYRM…RKLQSVQESL (64 aa).

Belongs to the universal ribosomal protein uS4 family. Part of the 30S ribosomal subunit. Contacts protein S5. The interaction surface between S4 and S5 is involved in control of translational fidelity.

In terms of biological role, one of the primary rRNA binding proteins, it binds directly to 16S rRNA where it nucleates assembly of the body of the 30S subunit. With S5 and S12 plays an important role in translational accuracy. In Chlamydia felis (strain Fe/C-56) (Chlamydophila felis), this protein is Small ribosomal subunit protein uS4.